Consider the following 912-residue polypeptide: Probable dipeptidyl-aminopeptidase B (912 aa).

Disordered regions lie at residues 1 to 30 (MAAE…SNSL) and 48 to 68 (NGST…DYSD). At 1-92 (MAAEKGGSSD…GGKPVQKKVK (92 aa)) the chain is on the cytoplasmic side. Composition is skewed to basic and acidic residues over residues 7 to 25 (GSSD…EYRD) and 54 to 67 (TGPD…RDYS). A helical; Signal-anchor for type II membrane protein membrane pass occupies residues 93–113 (IVLGFLLFLCLSGWSLAFVLF). Residues 114 to 912 (LFGGHESSKT…RAATWVGMSI (799 aa)) lie on the Vacuolar side of the membrane. 5 N-linked (GlcNAc...) asparagine glycosylation sites follow: Asn-130, Asn-210, Asn-346, Asn-569, and Asn-656. Catalysis depends on Ser-751, which acts as the Charge relay system. Asn-810 carries N-linked (GlcNAc...) asparagine glycosylation. Active-site charge relay system residues include Asp-828 and His-861. N-linked (GlcNAc...) asparagine glycosylation occurs at Asn-897.

The protein belongs to the peptidase S9B family.

The protein resides in the vacuole membrane. The catalysed reaction is Release of an N-terminal dipeptide, Xaa-Yaa-|-Zaa-, from a polypeptide, preferentially when Yaa is Pro, provided Zaa is neither Pro nor hydroxyproline.. In terms of biological role, type IV dipeptidyl-peptidase which removes N-terminal dipeptides sequentially from polypeptides having unsubstituted N-termini provided that the penultimate residue is proline. The chain is Probable dipeptidyl-aminopeptidase B (DAPB) from Paracoccidioides brasiliensis (strain Pb18).